Consider the following 100-residue polypeptide: Urease subunit gamma (100 aa).

It belongs to the urease gamma subunit family. In terms of assembly, heterotrimer of UreA (gamma), UreB (beta) and UreC (alpha) subunits. Three heterotrimers associate to form the active enzyme.

The protein resides in the cytoplasm. It carries out the reaction urea + 2 H2O + H(+) = hydrogencarbonate + 2 NH4(+). The protein operates within nitrogen metabolism; urea degradation; CO(2) and NH(3) from urea (urease route): step 1/1. The polypeptide is Urease subunit gamma (Nostoc sp. (strain PCC 7120 / SAG 25.82 / UTEX 2576)).